The chain runs to 357 residues: N-acetyl-gamma-glutamyl-phosphate reductase (357 aa).

Cys-160 is an active-site residue.

This sequence belongs to the NAGSA dehydrogenase family. Type 1 subfamily.

It is found in the cytoplasm. It carries out the reaction N-acetyl-L-glutamate 5-semialdehyde + phosphate + NADP(+) = N-acetyl-L-glutamyl 5-phosphate + NADPH + H(+). The protein operates within amino-acid biosynthesis; L-arginine biosynthesis; N(2)-acetyl-L-ornithine from L-glutamate: step 3/4. Its function is as follows. Catalyzes the NADPH-dependent reduction of N-acetyl-5-glutamyl phosphate to yield N-acetyl-L-glutamate 5-semialdehyde. The polypeptide is N-acetyl-gamma-glutamyl-phosphate reductase (Prochlorococcus marinus (strain MIT 9313)).